A 223-amino-acid polypeptide reads, in one-letter code: Putative 3-methyladenine DNA glycosylase (223 aa).

This sequence belongs to the DNA glycosylase MPG family.

This Pseudomonas savastanoi pv. phaseolicola (strain 1448A / Race 6) (Pseudomonas syringae pv. phaseolicola (strain 1448A / Race 6)) protein is Putative 3-methyladenine DNA glycosylase.